We begin with the raw amino-acid sequence, 183 residues long: Peptidoglycan recognition protein 1 (183 aa).

Residues Met-1–Ser-17 form the signal peptide. Disulfide bonds link Cys-18–Cys-142, Cys-34–Cys-79, and Cys-55–Cys-61. The region spanning Lys-40–Gly-168 is the N-acetylmuramoyl-L-alanine amidase domain.

The protein belongs to the N-acetylmuramoyl-L-alanine amidase 2 family. Expressed in all regions of the brain.

The protein resides in the secreted. It localises to the cytoplasmic granule. Functionally, innate immunity protein that plays several important functions in antimicrobial and antitumor defense systems. Acts as a pattern receptor that binds to murein peptidoglycans (PGN) of Gram-positive bacteria and thus provides bactericidal activity. Forms an equimolar complex with heat shock protein HSPA1A and induces programmed cell death through apoptosis and necroptosis in tumor cell lines by activating the TNFR1 receptor on the target cell membrane. In addition, acts in complex with the Ca(2+)-binding protein S100A4 as a chemoattractant able to induce lymphocyte movement. Mechanistically, this complex acts as a ligand of the chemotactic receptors CCR5 and CXCR3 which are present on the cells of the immune system. Promotes also the activation of lymphocytes that become able to kill virus-infected cells as well as tumor cells by modulating the spectrum of their target-cell specificity. Induction of cytotoxicity on monocyte surface requires interaction with TREM1 receptor. The sequence is that of Peptidoglycan recognition protein 1 (Pglyrp1) from Rattus norvegicus (Rat).